Reading from the N-terminus, the 390-residue chain is F-box/kelch-repeat protein At3g04660 (390 aa).

One can recognise an F-box domain in the interval 18–67; the sequence is YDPSSILPLELKIEILMKSPPKSIAKLGFVSNHWSSIIRGQVFTDLYMRR. 2 Kelch repeats span residues 115–161 and 272–323; these read FSPP…FGYD and MVDH…DQRV.

Part of a SCF (ASK-cullin-F-box) protein ligase complex. Interacts with SKP1A/ASK1, SKP1B/ASK2, ASK11 and ASK13.

Its subcellular location is the nucleus. It participates in protein modification; protein ubiquitination. Component of SCF(ASK-cullin-F-box) E3 ubiquitin ligase complexes, which may mediate the ubiquitination and subsequent proteasomal degradation of target proteins. This is F-box/kelch-repeat protein At3g04660 from Arabidopsis thaliana (Mouse-ear cress).